Here is a 1424-residue protein sequence, read N- to C-terminus: ABC multidrug transporter H (1424 aa).

The interval 1-49 is disordered; sequence MEDQGHLPSEPRALFDRRDDTDSTNTALDETDLSRTPLQDTSHTPHAED. Polar residues predominate over residues 23-42; the sequence is STNTALDETDLSRTPLQDTS. 2 N-linked (GlcNAc...) asparagine glycosylation sites follow: N79 and N275. The ABC transporter 1 domain occupies 96–351; the sequence is LSQFNIPQHI…MEEQGFVCRE (256 aa). 7 helical membrane-spanning segments follow: residues 488–508, 520–540, 544–564, 569–589, 605–625, 629–649, and 710–730; these read GLFI…LLAM, VLIK…IAQI, IPVL…MVGL, GAFF…TALF, VSGF…PYHA, WFIW…LLSI, and NFGI…IATS. Positions 760–782 are disordered; it reads EEAQLNEKAGHKGTGTDSEAQSN. N-linked (GlcNAc...) asparagine glycans are attached at residues N790 and N798. The region spanning 794-1037 is the ABC transporter 2 domain; sequence FTWKNLTYTV…VKDYFARYGA (244 aa). An ATP-binding site is contributed by 830-837; sequence GSSGAGKT. 4 consecutive transmembrane segments (helical) span residues 1131-1151, 1161-1181, 1200-1220, and 1240-1260; these read IALH…IGDS, TIFN…PLFI, VAFV…CAVL, and AIFF…QFIA. A glycan (N-linked (GlcNAc...) asparagine) is linked at N1265. 2 helical membrane-spanning segments follow: residues 1268-1288 and 1300-1320; these read FAAL…GVLV and WIYW…FSVF. The N-linked (GlcNAc...) asparagine glycan is linked to N1338. The helical transmembrane segment at 1395 to 1415 threads the bilayer; the sequence is TAIVCIFVLSSYALVYALMKL.

This sequence belongs to the ABC transporter superfamily. ABCG family. PDR (TC 3.A.1.205) subfamily.

It is found in the cell membrane. With respect to regulation, the efflux inhibitor FK506 impairs the transport activity. ABC efflux transporter that is able to transport rhodamine 6G (R-6G), a known substrate for many ABC transporters, but seems not to transport azoles. This is ABC multidrug transporter H from Aspergillus fumigatus (strain ATCC MYA-4609 / CBS 101355 / FGSC A1100 / Af293) (Neosartorya fumigata).